The sequence spans 426 residues: Enolase (426 aa).

Gln165 lines the (2R)-2-phosphoglycerate pocket. Catalysis depends on Glu207, which acts as the Proton donor. Mg(2+)-binding residues include Asp244, Glu285, and Asp312. The (2R)-2-phosphoglycerate site is built by Lys337, Arg366, Ser367, and Lys388. Lys337 (proton acceptor) is an active-site residue.

Belongs to the enolase family. The cofactor is Mg(2+).

It is found in the cytoplasm. Its subcellular location is the secreted. The protein resides in the cell surface. It carries out the reaction (2R)-2-phosphoglycerate = phosphoenolpyruvate + H2O. It participates in carbohydrate degradation; glycolysis; pyruvate from D-glyceraldehyde 3-phosphate: step 4/5. Functionally, catalyzes the reversible conversion of 2-phosphoglycerate (2-PG) into phosphoenolpyruvate (PEP). It is essential for the degradation of carbohydrates via glycolysis. This Thermosynechococcus vestitus (strain NIES-2133 / IAM M-273 / BP-1) protein is Enolase.